A 254-amino-acid chain; its full sequence is Uracil-DNA glycosylase (254 aa).

Asp78 (proton acceptor) is an active-site residue.

This sequence belongs to the uracil-DNA glycosylase (UDG) superfamily. UNG family.

The protein localises to the cytoplasm. It catalyses the reaction Hydrolyzes single-stranded DNA or mismatched double-stranded DNA and polynucleotides, releasing free uracil.. Functionally, excises uracil residues from the DNA which can arise as a result of misincorporation of dUMP residues by DNA polymerase or due to deamination of cytosine. This chain is Uracil-DNA glycosylase, found in Bordetella petrii (strain ATCC BAA-461 / DSM 12804 / CCUG 43448).